Consider the following 304-residue polypeptide: Serine/threonine-protein phosphatase PP1 isozyme 3 (304 aa).

The Mn(2+) site is built by D61, H63, D89, and N121. H122 acts as the Proton donor in catalysis. Mn(2+)-binding residues include H170 and H245.

The protein belongs to the PPP phosphatase family. PP-1 subfamily. Mn(2+) serves as cofactor.

The catalysed reaction is O-phospho-L-seryl-[protein] + H2O = L-seryl-[protein] + phosphate. The enzyme catalyses O-phospho-L-threonyl-[protein] + H2O = L-threonyl-[protein] + phosphate. This is Serine/threonine-protein phosphatase PP1 isozyme 3 (NPP3) from Nicotiana tabacum (Common tobacco).